Here is a 54-residue protein sequence, read N- to C-terminus: U-reduvitoxin-Pr7a (54 aa).

Residues 1–23 form the signal peptide; that stretch reads MDFLRILLFVLACIMALFTSAIA. Disulfide bonds link cysteine 26-cysteine 41, cysteine 33-cysteine 46, and cysteine 40-cysteine 53.

The protein belongs to the venom Ptu1-like knottin family. Expressed by the venom gland.

It localises to the secreted. Its function is as follows. Binds reversibly and blocks P/Q-type voltage-gated calcium channels (Cav). The sequence is that of U-reduvitoxin-Pr7a from Platymeris rhadamanthus (Red spot assassin bug).